Here is an 875-residue protein sequence, read N- to C-terminus: Alanine--tRNA ligase (875 aa).

Zn(2+) contacts are provided by His-564, His-568, Cys-666, and His-670.

It belongs to the class-II aminoacyl-tRNA synthetase family. As to quaternary structure, homotetramer. Zn(2+) serves as cofactor.

The protein resides in the cytoplasm. It catalyses the reaction tRNA(Ala) + L-alanine + ATP = L-alanyl-tRNA(Ala) + AMP + diphosphate. In terms of biological role, catalyzes the attachment of alanine to tRNA(Ala) in a two-step reaction: alanine is first activated by ATP to form Ala-AMP and then transferred to the acceptor end of tRNA(Ala). Also edits incorrectly charged Ser-tRNA(Ala) and Gly-tRNA(Ala) via its editing domain. The chain is Alanine--tRNA ligase from Citrobacter koseri (strain ATCC BAA-895 / CDC 4225-83 / SGSC4696).